The following is a 235-amino-acid chain: 2-C-methyl-D-erythritol 4-phosphate cytidylyltransferase (235 aa).

The protein belongs to the IspD/TarI cytidylyltransferase family. IspD subfamily.

It carries out the reaction 2-C-methyl-D-erythritol 4-phosphate + CTP + H(+) = 4-CDP-2-C-methyl-D-erythritol + diphosphate. It functions in the pathway isoprenoid biosynthesis; isopentenyl diphosphate biosynthesis via DXP pathway; isopentenyl diphosphate from 1-deoxy-D-xylulose 5-phosphate: step 2/6. Functionally, catalyzes the formation of 4-diphosphocytidyl-2-C-methyl-D-erythritol from CTP and 2-C-methyl-D-erythritol 4-phosphate (MEP). The chain is 2-C-methyl-D-erythritol 4-phosphate cytidylyltransferase from Pseudomonas entomophila (strain L48).